Consider the following 252-residue polypeptide: Imidazole glycerol phosphate synthase subunit HisF (252 aa).

Residues D11 and D130 contribute to the active site.

This sequence belongs to the HisA/HisF family. Heterodimer of HisH and HisF.

It is found in the cytoplasm. It carries out the reaction 5-[(5-phospho-1-deoxy-D-ribulos-1-ylimino)methylamino]-1-(5-phospho-beta-D-ribosyl)imidazole-4-carboxamide + L-glutamine = D-erythro-1-(imidazol-4-yl)glycerol 3-phosphate + 5-amino-1-(5-phospho-beta-D-ribosyl)imidazole-4-carboxamide + L-glutamate + H(+). The protein operates within amino-acid biosynthesis; L-histidine biosynthesis; L-histidine from 5-phospho-alpha-D-ribose 1-diphosphate: step 5/9. In terms of biological role, IGPS catalyzes the conversion of PRFAR and glutamine to IGP, AICAR and glutamate. The HisF subunit catalyzes the cyclization activity that produces IGP and AICAR from PRFAR using the ammonia provided by the HisH subunit. The sequence is that of Imidazole glycerol phosphate synthase subunit HisF from Persephonella marina (strain DSM 14350 / EX-H1).